Here is a 603-residue protein sequence, read N- to C-terminus: Arginine--tRNA ligase (603 aa).

Residues 143 to 153 (PNIAKEMHVGH) carry the 'HIGH' region motif.

This sequence belongs to the class-I aminoacyl-tRNA synthetase family. Monomer.

The protein resides in the cytoplasm. The enzyme catalyses tRNA(Arg) + L-arginine + ATP = L-arginyl-tRNA(Arg) + AMP + diphosphate. The protein is Arginine--tRNA ligase of Prochlorococcus marinus (strain SARG / CCMP1375 / SS120).